Consider the following 862-residue polypeptide: Short transient receptor potential channel 7 (862 aa).

Residues 1 to 21 (MLGSNTFKNMQRRHTTLREKG) are disordered. Over 1 to 351 (MLGSNTFKNM…GLRQQSIAVK (351 aa)) the chain is Cytoplasmic. A compositionally biased stretch (basic residues) spans 10–21 (MQRRHTTLREKG). Thr-15 is modified (phosphothreonine; by PKG/PRKG1). 4 ANK repeats span residues 42-71 (PEEE…TLNF), 77-106 (MGQN…LARV), 108-134 (DALL…FAQG), and 163-192 (HDIT…RIER). Residues 352–372 (FLAVFGVSIGLPFLAIAYWIA) traverse the membrane as a helical segment. At 373-383 (PCSKLGQTLRS) the chain is on the extracellular side. The helical transmembrane segment at 384-404 (PFMKFVAHAVSFTIFLGLLVV) threads the bilayer. The Cytoplasmic segment spans residues 405 to 465 (NASDRFEGVK…KEIWEEGPRE (61 aa)). Residues 466 to 486 (YVLHLWNLLDFGMLSIFVASF) traverse the membrane as a helical segment. Residues 487–537 (TARFMAFLKASEAQLYVDQYVQDVTLHNVSLPPEVAYFTYARDKWWPSDPQ) lie on the Extracellular side of the membrane. Asn-514 carries N-linked (GlcNAc...) asparagine glycosylation. The helical transmembrane segment at 538–558 (IISEGLYAIAVVLSFSRIAYI) threads the bilayer. At 559–581 (LPANESFGPLQISLGRTVKDIFK) the chain is on the cytoplasmic side. A helical transmembrane segment spans residues 582-602 (FMVIFIMVFVAFMIGMFNLYS). The Extracellular portion of the chain corresponds to 603–651 (YYRGAKYNPAFTTVEESFKTLFWSIFGLSEVISVVLKYDHKFIENIGYV). The chain crosses the membrane as a helical span at residues 652–672 (LYGVYNVTMVVVLLNMLIAMI). Residues 673 to 862 (NNSYQEIEED…HLRVNQGKDI (190 aa)) are Cytoplasmic-facing.

This sequence belongs to the transient receptor (TC 1.A.4) family. STrpC subfamily. TRPC7 sub-subfamily. In terms of assembly, interacts with MX1 and RNF24. Interacts (via ANK-repeat domains) with PRKG1. Phosphorylation by PRKG1 at Thr-15 negatively regulates TRPC7 activity.

Its subcellular location is the cell membrane. It is found in the nucleus envelope. It carries out the reaction Ca(2+)(in) = Ca(2+)(out). In terms of biological role, forms a receptor-activated non-selective calcium permeant cation channel. Probably is operated by a phosphatidylinositol second messenger system activated by receptor tyrosine kinases or G-protein coupled receptors. Activated by diacylglycerol (DAG). May also be activated by intracellular calcium store depletion. The protein is Short transient receptor potential channel 7 (Trpc7) of Mus musculus (Mouse).